Consider the following 394-residue polypeptide: Chaperone protein DnaJ (394 aa).

The region spanning aspartate 4–glycine 68 is the J domain. The segment at glycine 136–threonine 218 adopts a CR-type zinc-finger fold. Cysteine 149, cysteine 152, cysteine 166, cysteine 169, cysteine 192, cysteine 195, cysteine 206, and cysteine 209 together coordinate Zn(2+). CXXCXGXG motif repeat units lie at residues cysteine 149–glycine 156, cysteine 166–glycine 173, cysteine 192–glycine 199, and cysteine 206–glycine 213.

The protein belongs to the DnaJ family. Homodimer. Zn(2+) is required as a cofactor.

Its subcellular location is the cytoplasm. In terms of biological role, participates actively in the response to hyperosmotic and heat shock by preventing the aggregation of stress-denatured proteins and by disaggregating proteins, also in an autonomous, DnaK-independent fashion. Unfolded proteins bind initially to DnaJ; upon interaction with the DnaJ-bound protein, DnaK hydrolyzes its bound ATP, resulting in the formation of a stable complex. GrpE releases ADP from DnaK; ATP binding to DnaK triggers the release of the substrate protein, thus completing the reaction cycle. Several rounds of ATP-dependent interactions between DnaJ, DnaK and GrpE are required for fully efficient folding. Also involved, together with DnaK and GrpE, in the DNA replication of plasmids through activation of initiation proteins. The sequence is that of Chaperone protein DnaJ from Synechococcus sp. (strain JA-2-3B'a(2-13)) (Cyanobacteria bacterium Yellowstone B-Prime).